The chain runs to 415 residues: Alpha-N-acetylgalactosaminidase (415 aa).

A signal peptide spans M1 to M17. Cystine bridges form between C38–C80, C42–C49, and C127–C158. Substrate contacts are provided by residues D78–D79 and K154. D156 acts as the Nucleophile in catalysis. N177 is a glycosylation site (N-linked (GlcNAc...) asparagine). A disulfide bridge connects residues C187 and C209. Residue S188 coordinates substrate. The N-linked (GlcNAc...) asparagine glycan is linked to N201. Residues R213 and D217 each coordinate substrate. Residue D217 is the Proton donor of the active site. S322 carries the post-translational modification Phosphoserine. N330 carries N-linked (GlcNAc...) asparagine glycosylation. A Phosphoserine modification is found at S332. A glycan (N-linked (GlcNAc...) asparagine) is linked at N385.

Belongs to the glycosyl hydrolase 27 family. In terms of assembly, homodimer.

It localises to the lysosome. It carries out the reaction Cleavage of non-reducing alpha-(1-&gt;3)-N-acetylgalactosamine residues from human blood group A and AB mucin glycoproteins, Forssman hapten and blood group A lacto series glycolipids.. The catalysed reaction is a neolactoside IV(3)-alpha-GalNAc,IV(2)-alpha-Fuc-nLc4Cer(d18:1(4E)) + H2O = a neolactoside IV(2)-alpha-Fuc-nLc4Cer(d18:1(4E)) + N-acetyl-alpha-D-galactosamine. It catalyses the reaction a neolactoside IV(3)-alpha-GalNAc,IV(2)-alpha-Fuc-nLc4Cer(d18:0) + H2O = a neolactoside IV(2)-alpha-Fuc-nLc4Cer(d18:0) + N-acetyl-alpha-D-galactosamine. The enzyme catalyses a globoside IV3GalNAc-Gb4Cer + H2O = N-acetyl-alpha-D-galactosamine + a globoside Gb4Cer. Removes terminal alpha-N-acetylgalactosamine residues from glycolipids and glycopeptides. Required for the breakdown of glycolipids. This chain is Alpha-N-acetylgalactosaminidase (Naga), found in Rattus norvegicus (Rat).